The chain runs to 407 residues: Deacetylase Atu3266 (407 aa).

6 residues coordinate Zn(2+): His-75, His-77, Lys-173, His-206, His-229, and Asp-289. N6-carboxylysine is present on Lys-173.

Belongs to the metallo-dependent hydrolases superfamily. Atu3266/EF_0837 deacetylase family. As to quaternary structure, homohexamer, dimer of trimers. It depends on Zn(2+) as a cofactor.

In terms of biological role, esterase that catalyzes the deacetylation of acetyl-(R)-mandelate (in vitro). Can also hydrolyze acetyl glycolate, but with lower efficiency. Has very low N-acetyl-D-amino acid deacetylase activity with N-acetyl-D-serine and N-acetyl-D-threonine (in vitro). Theoretical substrate docking studies suggest that other N-acetylated amino acids may optimally occupy the active site and may in fact be the physiological substrates. This Agrobacterium fabrum (strain C58 / ATCC 33970) (Agrobacterium tumefaciens (strain C58)) protein is Deacetylase Atu3266.